The primary structure comprises 446 residues: Divalent metal cation transporter MntH (446 aa).

Helical transmembrane passes span 32–52 (FSFL…GNWI), 59–79 (AQFG…AMLL), 107–127 (AFVF…AEVI), 139–159 (IPLL…LFIM), 168–188 (AIVG…VFIA), 210–230 (GALF…NLYL), 264–284 (SIAF…FFGV), 303–323 (PLLG…ALLA), 355–375 (LITR…FNSN), 381–401 (QLLV…LIPL), and 420–440 (VNII…YLII).

The protein belongs to the NRAMP family.

The protein localises to the cell membrane. In terms of biological role, h(+)-stimulated, divalent metal cation uptake system. In Staphylococcus saprophyticus subsp. saprophyticus (strain ATCC 15305 / DSM 20229 / NCIMB 8711 / NCTC 7292 / S-41), this protein is Divalent metal cation transporter MntH.